The following is a 447-amino-acid chain: Gamma-glutamyl phosphate reductase (447 aa).

Belongs to the gamma-glutamyl phosphate reductase family.

It is found in the cytoplasm. It carries out the reaction L-glutamate 5-semialdehyde + phosphate + NADP(+) = L-glutamyl 5-phosphate + NADPH + H(+). It functions in the pathway amino-acid biosynthesis; L-proline biosynthesis; L-glutamate 5-semialdehyde from L-glutamate: step 2/2. Its function is as follows. Catalyzes the NADPH-dependent reduction of L-glutamate 5-phosphate into L-glutamate 5-semialdehyde and phosphate. The product spontaneously undergoes cyclization to form 1-pyrroline-5-carboxylate. The sequence is that of Gamma-glutamyl phosphate reductase from Methanosarcina acetivorans (strain ATCC 35395 / DSM 2834 / JCM 12185 / C2A).